Here is a 394-residue protein sequence, read N- to C-terminus: Magnesium transporter MRS2-2 (394 aa).

Residues 115–145 form a disordered region; it reads PVGNASHNGGQGDGKEIAGAQNDGDTGDEDE. Helical transmembrane passes span 329-349 and 366-386; these read LVLS…GIFG and YVVG…MSYA. Positions 349–351 match the Required for magnesium transport activity motif; it reads GMN.

The protein belongs to the CorA metal ion transporter (MIT) (TC 1.A.35.5) family. Expressed in the whole plant but preferentially in the mature anthers.

The protein localises to the membrane. Low-affinity magnesium transporter that mediates the influx of magnesium. Plays a crucial role in male gametophyte development and male fertility. This is Magnesium transporter MRS2-2 (MRS2-2) from Arabidopsis thaliana (Mouse-ear cress).